A 287-amino-acid polypeptide reads, in one-letter code: Seed leukoagglutinin (287 aa).

Residues 1–29 (MATSNSKPTQVLLATFLTFFFLLLNNVNS) form the signal peptide. Y74 is a binding site for N-acetyl-alpha-neuraminyl-(2-&gt;3)-beta-D-galactosyl-(1-&gt;4)-beta-D-glucose. N-linked (GlcNAc...) (paucimannose) asparagine glycosylation occurs at N90. The N-acetyl-alpha-neuraminyl-(2-&gt;3)-beta-D-galactosyl-(1-&gt;4)-beta-D-glucose site is built by D116, S133, and K136. Residue N142 is glycosylated (N-linked (GlcNAc...) (paucimannose) asparagine). 2 residues coordinate Mn(2+): E156 and D158. Residues D158, Y160, D166, and D169 each contribute to the Ca(2+) site. 2 residues coordinate N-acetyl-alpha-neuraminyl-(2-&gt;3)-beta-D-galactosyl-(1-&gt;4)-beta-D-glucose: Y160 and D166. Residues D169 and H174 each coordinate Mn(2+). N-linked (GlcNAc...) (high mannose) asparagine; partial glycosylation occurs at N208. N-linked (GlcNAc...) (paucimannose) asparagine; partial glycosylation is present at N220. An N-acetyl-alpha-neuraminyl-(2-&gt;3)-beta-D-galactosyl-(1-&gt;4)-beta-D-glucose-binding site is contributed by E253. The propeptide at 279–287 (NVHIARYTA) is removed in mature form.

It belongs to the leguminous lectin family. As to quaternary structure, homodimer; disulfide-linked. Dimer of homodimers. The glycosylation on N-90 is determined to by of the high mannose type in PubMed:26003537, while PubMed:27720757 found a paucimannose at this position. In terms of processing, processed at its C-terminus.

Functionally, sialic acid-binding lectin recognizing oligosaccharides containing terminal sialic acid linked via alpha-2,3 bond to penultimate galactose residues. Binds the trisaccharide sequence Neu5Ac-alpha-2,3-Gal-beta-1,4-GlcNAc. Binds fetuin when fully glycosylated but not when the high mannose-type glycans are removed, although the secondary structure is virtually unaffected by deglycosylation of the high mannose-type glycans. The lectin activity may depend on the presence of a single GlcNAc attached to N-90. The polypeptide is Seed leukoagglutinin (Maackia amurensis (Amur maackia)).